A 149-amino-acid polypeptide reads, in one-letter code: 6,7-dimethyl-8-ribityllumazine synthase (149 aa).

Residues phenylalanine 22, 56 to 58 (ALE), and 80 to 82 (AVI) contribute to the 5-amino-6-(D-ribitylamino)uracil site. Residue 85-86 (ET) participates in (2S)-2-hydroxy-3-oxobutyl phosphate binding. Histidine 88 functions as the Proton donor in the catalytic mechanism. Asparagine 113 is a 5-amino-6-(D-ribitylamino)uracil binding site. Arginine 127 is a (2S)-2-hydroxy-3-oxobutyl phosphate binding site.

This sequence belongs to the DMRL synthase family.

It catalyses the reaction (2S)-2-hydroxy-3-oxobutyl phosphate + 5-amino-6-(D-ribitylamino)uracil = 6,7-dimethyl-8-(1-D-ribityl)lumazine + phosphate + 2 H2O + H(+). It participates in cofactor biosynthesis; riboflavin biosynthesis; riboflavin from 2-hydroxy-3-oxobutyl phosphate and 5-amino-6-(D-ribitylamino)uracil: step 1/2. Catalyzes the formation of 6,7-dimethyl-8-ribityllumazine by condensation of 5-amino-6-(D-ribitylamino)uracil with 3,4-dihydroxy-2-butanone 4-phosphate. This is the penultimate step in the biosynthesis of riboflavin. The sequence is that of 6,7-dimethyl-8-ribityllumazine synthase from Methylobacillus flagellatus (strain ATCC 51484 / DSM 6875 / VKM B-1610 / KT).